A 437-amino-acid polypeptide reads, in one-letter code: 2-methylisoborneol synthase (437 aa).

A disordered region spans residues 32-125 (AHDSEATVGG…IPGLYHHPVP (94 aa)). Residues 59–73 (PPSPAAPPTDVPAPE) show a composition bias toward pro residues. Mg(2+) is bound by residues D194, D195, E199, N342, S346, and E350.

It belongs to the terpene synthase family. 2-methylisoborneol synthase subfamily. Mg(2+) is required as a cofactor.

The enzyme catalyses (E)-2-methylgeranyl diphosphate + H2O = 2-methylisoborneol + diphosphate. In terms of biological role, catalyzes the cyclization of 2-methylgeranyl diphosphate (2-MeGPP) to 2-methylisoborneol (2-MIB), which likely involves the intermediacy of 2-methyllinalyl diphosphate. The chain is 2-methylisoborneol synthase from Streptomyces griseus.